Here is a 78-residue protein sequence, read N- to C-terminus: Acyl carrier protein (78 aa).

The region spanning 2–77 (STIEESVKSI…AAIDFIKESK (76 aa)) is the Carrier domain. S37 is modified (O-(pantetheine 4'-phosphoryl)serine).

The protein belongs to the acyl carrier protein (ACP) family. 4'-phosphopantetheine is transferred from CoA to a specific serine of apo-ACP by AcpS. This modification is essential for activity because fatty acids are bound in thioester linkage to the sulfhydryl of the prosthetic group.

It is found in the cytoplasm. Its pathway is lipid metabolism; fatty acid biosynthesis. Carrier of the growing fatty acid chain in fatty acid biosynthesis. The sequence is that of Acyl carrier protein from Wigglesworthia glossinidia brevipalpis.